The chain runs to 305 residues: Glycine cleavage system transcriptional activator (305 aa).

The region spanning 6–63 is the HTH lysR-type domain; that stretch reads PPLNALRVFDAAARHLSFTRAAEELFVTQAAVSHQIKSLEDFLGLKLFRRRNRSLLLT. The segment at residues 23–42 is a DNA-binding region (H-T-H motif); sequence FTRAAEELFVTQAAVSHQIK.

The protein belongs to the LysR transcriptional regulatory family.

It localises to the cytoplasm. Functionally, regulatory protein for the glycine cleavage system operon (gcv). Mediates activation of gcv by glycine and repression by purines. GcvA is negatively autoregulated. Binds to three sites upstream of the gcv promoter. The chain is Glycine cleavage system transcriptional activator (gcvA) from Escherichia coli O157:H7.